We begin with the raw amino-acid sequence, 591 residues long: Aspartate--tRNA(Asp/Asn) ligase (591 aa).

Glutamate 176 lines the L-aspartate pocket. An aspartate region spans residues 200 to 203; the sequence is QLFK. Residue arginine 222 participates in L-aspartate binding. Residues 222–224 and glutamine 231 contribute to the ATP site; that span reads RDE. Histidine 450 lines the L-aspartate pocket. Glutamate 484 contacts ATP. Arginine 491 is an L-aspartate binding site. 536 to 539 serves as a coordination point for ATP; the sequence is GLDR.

The protein belongs to the class-II aminoacyl-tRNA synthetase family. Type 1 subfamily. Homodimer.

The protein resides in the cytoplasm. The catalysed reaction is tRNA(Asx) + L-aspartate + ATP = L-aspartyl-tRNA(Asx) + AMP + diphosphate. In terms of biological role, aspartyl-tRNA synthetase with relaxed tRNA specificity since it is able to aspartylate not only its cognate tRNA(Asp) but also tRNA(Asn). Reaction proceeds in two steps: L-aspartate is first activated by ATP to form Asp-AMP and then transferred to the acceptor end of tRNA(Asp/Asn). The protein is Aspartate--tRNA(Asp/Asn) ligase of Bacillus cereus (strain B4264).